A 585-amino-acid chain; its full sequence is Putative indole-3-acetic acid-amido synthetase GH3.9 (585 aa).

The protein belongs to the IAA-amido conjugating enzyme family.

Its function is as follows. Catalyzes the synthesis of indole-3-acetic acid (IAA)-amino acid conjugates, providing a mechanism for the plant to cope with the presence of excess auxin. This is Putative indole-3-acetic acid-amido synthetase GH3.9 (GH3.9) from Arabidopsis thaliana (Mouse-ear cress).